We begin with the raw amino-acid sequence, 149 residues long: Nucleoside diphosphate kinase 1 (149 aa).

6 residues coordinate ATP: Lys-10, Phe-58, Arg-86, Thr-92, Arg-103, and Asn-113. His-116 serves as the catalytic Pros-phosphohistidine intermediate.

This sequence belongs to the NDK family. Mg(2+) is required as a cofactor.

The enzyme catalyses a 2'-deoxyribonucleoside 5'-diphosphate + ATP = a 2'-deoxyribonucleoside 5'-triphosphate + ADP. It carries out the reaction a ribonucleoside 5'-diphosphate + ATP = a ribonucleoside 5'-triphosphate + ADP. Its function is as follows. Major role in the synthesis of nucleoside triphosphates other than ATP. The ATP gamma phosphate is transferred to the NDP beta phosphate via a ping-pong mechanism, using a phosphorylated active-site intermediate. This NDK is microtubule-associated. The polypeptide is Nucleoside diphosphate kinase 1 (NDPK1) (Pisum sativum (Garden pea)).